A 192-amino-acid polypeptide reads, in one-letter code: Probable apo-citrate lyase phosphoribosyl-dephospho-CoA transferase (192 aa).

Belongs to the CitX family.

The enzyme catalyses apo-[citrate lyase ACP] + 2'-(5''-triphospho-alpha-D-ribosyl)-3'-dephospho-CoA = holo-[citrate lyase ACP] + diphosphate. Transfers 2-(5''-triphosphoribosyl)-3'-dephosphocoenzyme-A on a serine residue to the apo-acyl carrier protein (gamma chain) of the citrate lyase to yield holo-acyl carrier protein. The polypeptide is Probable apo-citrate lyase phosphoribosyl-dephospho-CoA transferase (Streptococcus pyogenes serotype M6 (strain ATCC BAA-946 / MGAS10394)).